The sequence spans 115 residues: NADH-ubiquinone oxidoreductase chain 3 (115 aa).

The next 3 membrane-spanning stretches (helical) occupy residues 4-24 (LTAL…AFWL), 55-75 (FFLV…LLPL), and 83-103 (YINI…LGLA).

Belongs to the complex I subunit 3 family. Core subunit of respiratory chain NADH dehydrogenase (Complex I) which is composed of 45 different subunits. Interacts with TMEM186. Interacts with TMEM242.

The protein localises to the mitochondrion inner membrane. The enzyme catalyses a ubiquinone + NADH + 5 H(+)(in) = a ubiquinol + NAD(+) + 4 H(+)(out). Core subunit of the mitochondrial membrane respiratory chain NADH dehydrogenase (Complex I) which catalyzes electron transfer from NADH through the respiratory chain, using ubiquinone as an electron acceptor. Essential for the catalytic activity of complex I. The chain is NADH-ubiquinone oxidoreductase chain 3 from Peromyscus polionotus (Oldfield mouse).